The sequence spans 528 residues: GMP synthase [glutamine-hydrolyzing] (528 aa).

The 192-residue stretch at 13 to 204 (AIVILDFGSQ…VYHICGCEPD (192 aa)) folds into the Glutamine amidotransferase type-1 domain. The active-site Nucleophile is C90. Active-site residues include H178 and E180. In terms of domain architecture, GMPS ATP-PPase spans 205–403 (WTTTAFIEEA…LGLPEEIVRR (199 aa)). Residue 232–238 (SGGVDSS) coordinates ATP.

As to quaternary structure, homodimer.

The enzyme catalyses XMP + L-glutamine + ATP + H2O = GMP + L-glutamate + AMP + diphosphate + 2 H(+). The protein operates within purine metabolism; GMP biosynthesis; GMP from XMP (L-Gln route): step 1/1. Catalyzes the synthesis of GMP from XMP. In Prochlorococcus marinus (strain MIT 9303), this protein is GMP synthase [glutamine-hydrolyzing].